The following is a 1723-amino-acid chain: MKWLPATAVFAAVLPALTAFGDPASVEISTSHTGSGDPTSDAALTGFTQSSTETDGTTYTIVGDITFSTFTNIPVPVVTPDANDSSSNSSKGGSSSSGATSLIRSSNLHSDFDFTKDSVLDLYHLFFPSASNTLNPALLSSSSSGGSSSSSSSSSSGSASAVVAADPKGGAAFYSNEANGTLTFTTDSGNPGSLTLQNLKMTGDGAAIYSKGPLVFTGLKNLTFTGNESQKSGGAAYTEGALTTQAIVEAVTFTGNTSAGQGGAIYVKEATLFNALDSLKFEKNTSGQAGGGIYTESTLTISNITKSIEFISNKASVPAPAPEPTSPAPSSLINSTTIDTSTLQTRAASATPAVAPVAAVTPTPISTQETAGNGGAIYAKQGISISTFKDLTFKSNSASVDATLTVDSSTIGESGGAIFAADSIQIQQCTGTTLFSGNTANKSGGGIYAVGQVTLEDIANLKMTNNTCKGEGGAIYTKKALTINNGAILTTFSGNTSTDNGGAIFAVGGITLSDLVEVRFSKNKTGNYSAPITKAASNTAPVVSSSTTAASPAVPAAAAAPVTNAAKGGALYSTEGLTVSGITSILSFENNECQNQGGGAYVTKTFQCSDSHRLQFTSNKAADEGGGLYCGDDVTLTNLTGKTLFQENSSEKHGGGLSLASGKSLTMTSLESFCLNANTAKENGGGANVPENIVLTFTYTPTPNEPAPVQQPVYGEALVTGNTATKSGGGIYTKNAAFSNLSSVTFDQNTSSENGGALLTQKAADKTDCSFTYITNVNITNNTATGNGGGIAGGKAHFDRIDNLTVQSNQAKKGGGVYLEDALILEKVITGSVSQNTATESGGGIYAKDIQLQALPGSFTITDNKVETSLTTSTNLYGGGIYSSGAVTLTNISGTFGITGNSVINTATSQDADIQGGGIYATTSLSINQCNTPILFSNNSAATKKTSTTKQIAGGAIFSAAVTIENNSQPIIFLNNSAKSEATTAATAGNKDSCGGAIAANSVTLTNNPEITFKGNYAETGGAIGCIDLTNGSPPRKVSIADNGSVLFQDNSALNRGGAIYGETIDISRTGATFIGNSSKHDGSAICCSTALTLAPNSQLIFENNKVTETTATTKASINNLGAAIYGNNETSDITISLSAENGSIFFKNNLCTATNKYCSIAGNVKFTAIEASAGKAISFYDAVNVSTKETNAQELKLNEKATSTGTILFSGELHENKSYIPQKVTFAHGNLILGKNAELSVVSFTQSPGTTITMGPGSVLSNHSKEAGGIAINNVIIDFSEIVPTKDNATVAPPTLKLVSRTNADSKDKIDITGTVTLLDPNGNLYQNSYLGEDRDITLFNIDNSASGAVTATNVTLQGNLGAKKGYLGTWNLDPNSSGSKIILKWTFDKYLRWPYIPRDNHFYINSIWGAQNSLVTVKQGILGNMLNNARFEDPAFNNFWASAIGSFLRKEVSRNSDSFTYHGRGYTAAVDAKPRQEFILGAAFSQVFGHAESEYHLDNYKHKGSGHSTQASLYAGNIFYFPAIRSRPILFQGVATYGYMQHDTTTYYPSIEEKNMANWDSIAWLFDLRFSVDLKEPQPHSTARLTFYTEAEYTRIRQEKFTELDYDPRSFSACSYGNLAIPTGFSVDGALAWREIILYNKVSAAYLPVILRNNPKATYEVLSTKEKGNVVNVLPTRNAARAEVSSQIYLGSYWTLYGTYTIDASMNTLVQMANGGIRFVF.

An N-terminal signal peptide occupies residues 1–21; that stretch reads MKWLPATAVFAAVLPALTAFG. 2 disordered regions span residues 78–100 and 139–161; these read VTPD…SGAT and LSSS…SASA. Composition is skewed to low complexity over residues 85–100 and 140–161; these read SSSN…SGAT and SSSS…SASA. Positions 1434 to 1723 constitute an Autotransporter domain; the sequence is EDPAFNNFWA…MANGGIRFVF (290 aa).

Belongs to the PMP outer membrane protein family.

The protein resides in the secreted. The protein localises to the cell wall. Its subcellular location is the cell outer membrane. The polypeptide is Probable outer membrane protein pmp20 (pmp20) (Chlamydia pneumoniae (Chlamydophila pneumoniae)).